The primary structure comprises 615 residues: Increased rDNA silencing protein 4 (615 aa).

Disordered stretches follow at residues 38–135 (SNEV…SSHS), 152–260 (LLGI…NRSQ), 277–304 (PSIA…NYSS), and 323–445 (KPKH…NEDK). Over residues 50 to 65 (VSRNPQTRLSEPSLQK) the composition is skewed to polar residues. Low complexity-rich tracts occupy residues 121–135 (HSQS…SSHS) and 157–168 (SRSSSRNGSNES). Residue S180 is modified to Phosphoserine. The span at 184–198 (LLTSFSSGRRLSSSS) shows a compositional bias: low complexity. Positions 248–260 (NPDTSDVISNRSQ) are enriched in polar residues. Residues 281-290 (SSNTTTTTSN) are compositionally biased toward low complexity. Residues 365–377 (ENDHASSLHEGNL) show a composition bias toward basic and acidic residues. Residues 389 to 402 (DVYDDTDSDSESDQ) show a composition bias toward acidic residues. Residues 409–438 (KPRKRDRIKRKIRNSANKTAHHRPIHRTRD) are compositionally biased toward basic residues. The EH domain maps to 460–571 (ERKRYESMWV…QCVWDSVDRY (112 aa)).

This sequence belongs to the IRS4 family. Interacts with INP51.

Its function is as follows. With TAX4, acts as a positive regulator of INP51 activity and phosphatidylinositol 4,5-bisphosphate turnover. Negatively regulates signaling through the cell integrity pathway, including the MAP kinase SLT2. Also seems to be involved in rDNA silencing. The chain is Increased rDNA silencing protein 4 (IRS4) from Saccharomyces cerevisiae (strain YJM789) (Baker's yeast).